A 177-amino-acid polypeptide reads, in one-letter code: SKP1-like protein 15 (177 aa).

Positions 108-167 are interaction with the F-box domain of F-box proteins; the sequence is ILAANYLNVEGLLGLTCQTVADYIKDKTPEEVRELFNIENDFTHEEEEEAIRKENAWAFE.

This sequence belongs to the SKP1 family. In terms of assembly, part of a SCF (SKP1-cullin-F-box) protein ligase complex. Expressed at low levels in seedlings and leaves.

The protein resides in the nucleus. The protein operates within protein modification; protein ubiquitination. Functionally, involved in ubiquitination and subsequent proteasomal degradation of target proteins. Together with CUL1, RBX1 and a F-box protein, it forms a SCF E3 ubiquitin ligase complex. The functional specificity of this complex depends on the type of F-box protein. In the SCF complex, it serves as an adapter that links the F-box protein to CUL1. The sequence is that of SKP1-like protein 15 (ASK15) from Arabidopsis thaliana (Mouse-ear cress).